Reading from the N-terminus, the 102-residue chain is UPF0213 protein Spro_0507 (102 aa).

The GIY-YIG domain maps to 6–81 (PTWHLYMLRM…KQLSKTQKER (76 aa)).

Belongs to the UPF0213 family.

This chain is UPF0213 protein Spro_0507, found in Serratia proteamaculans (strain 568).